The primary structure comprises 116 residues: Vesicle-associated membrane protein 2 (116 aa).

A disordered region spans residues 1–33 (MSATAATAPPAAPAGEGGPPAPPPNLTSNRRLQ). Ser2 bears the N-acetylserine mark. Over 2–94 (SATAATAPPA…KRKYWWKNLK (93 aa)) the chain is Cytoplasmic. The 61-residue stretch at 31–91 (RLQQTQAQVD…AKLKRKYWWK (61 aa)) folds into the v-SNARE coiled-coil homology domain. Residues 92–116 (NLKMMIILGVICAIILIIIIVYFST) form a required for interaction with SEPT8 region. A helical; Anchor for type IV membrane protein transmembrane segment spans residues 95 to 114 (MMIILGVICAIILIIIIVYF). Residues 115 to 116 (ST) lie on the Vesicular side of the membrane.

Belongs to the synaptobrevin family. In terms of assembly, part of the SNARE core complex containing SNAP25, VAMP2 and STX1A; this complex constitutes the basic catalytic machinery of the complex neurotransmitter release apparatus. Recruited to the SNARE complex following binding of the SNARE complex component STX1A to STXBP1. This complex binds to CPLX1. Interacts with POPDC1 and STX4. Interacts with VAPA and VAPB. Interacts with WDFY2, PRKCZ and PRKCI. Forms a complex with WDFY2 and PRKCZ. Interacts (via N-terminus) with KCNB1 (via N-terminus and C-terminus); stimulates the channel inactivation rate of KCNB1. Interacts with SEPT8; the interaction inhibits interaction of VAMP2 with SYP. Interacts with SYP; the interaction is inhibited by interaction with SEPT8. Interacts with PICALM. Interacts with alpha-synuclein/SNCA. Interacts with STX3. In terms of processing, phosphorylated by PRKCZ in vitro and this phosphorylation is increased in the presence of WDFY2. (Microbial infection) Targeted and hydrolyzed by C.botulinum neurotoxin type B (BoNT/B, botB) which hydrolyzes the 76-Gln-|-Phe-77 bond and probably inhibits neurotransmitter release. Post-translationally, (Microbial infection) Targeted and hydrolyzed by C.botulinum neurotoxin type D (BoNT/D, botD) which probably hydrolyzes the 59-Lys-|-Leu-60 bond and inhibits neurotransmitter release. Note that humans are not known to be infected by C.botulinum type D. In terms of processing, (Microbial infection) Targeted and hydrolyzed by C.botulinum neurotoxin type F (BoNT/F, botF) which hydrolyzes the 58-Gln-|-Lys-59 bond and probably inhibits neurotransmitter release. (Microbial infection) Targeted and hydrolyzed by C.tetani tetanus toxin (tetX) which hydrolyzes the 76-Gln-|-Phe-77 bond and probably inhibits neurotransmitter release. Nervous system and skeletal muscle.

The protein resides in the cytoplasmic vesicle. Its subcellular location is the secretory vesicle. The protein localises to the synaptic vesicle membrane. It is found in the cell membrane. Its function is as follows. Involved in the targeting and/or fusion of transport vesicles to their target membrane. Major SNARE protein of synaptic vesicles which mediates fusion of synaptic vesicles to release neurotransmitters. Essential for fast vesicular exocytosis and activity-dependent neurotransmitter release as well as fast endocytosis that mediates rapid reuse of synaptic vesicles. Modulates the gating characteristics of the delayed rectifier voltage-dependent potassium channel KCNB1. The chain is Vesicle-associated membrane protein 2 from Homo sapiens (Human).